The sequence spans 373 residues: Alanine dehydrogenase (373 aa).

The substrate site is built by Arg15 and Lys75. The Proton donor/acceptor role is filled by His96. Residues Ser134, 178-179 (IV), Asp198, Ser220, 239-240 (VL), 267-270 (VAID), Arg280, and 299-302 (VANI) contribute to the NAD(+) site. Asp270 serves as the catalytic Proton donor/acceptor.

This sequence belongs to the AlaDH/PNT family. In terms of assembly, homohexamer. Trimer of dimer.

The protein resides in the cytoplasm. It catalyses the reaction L-alanine + NAD(+) + H2O = pyruvate + NH4(+) + NADH + H(+). Its pathway is amino-acid degradation; L-alanine degradation via dehydrogenase pathway; NH(3) and pyruvate from L-alanine: step 1/1. Catalyzes the reversible reductive amination of pyruvate to L-alanine. This enzyme is a key factor in the assimilation of L-alanine as an energy source through the tricarboxylic acid cycle. The sequence is that of Alanine dehydrogenase from Methanococcus maripaludis (strain DSM 14266 / JCM 13030 / NBRC 101832 / S2 / LL).